The sequence spans 303 residues: uncharacterized protein (303 aa).

This is an uncharacterized protein from Haemophilus influenzae (strain ATCC 51907 / DSM 11121 / KW20 / Rd).